The chain runs to 1394 residues: DNA-directed RNA polymerase subunit beta'' (1394 aa).

Zn(2+) contacts are provided by C224, C295, C302, and C305.

It belongs to the RNA polymerase beta' chain family. RpoC2 subfamily. In terms of assembly, in plastids the minimal PEP RNA polymerase catalytic core is composed of four subunits: alpha, beta, beta', and beta''. When a (nuclear-encoded) sigma factor is associated with the core the holoenzyme is formed, which can initiate transcription. It depends on Zn(2+) as a cofactor.

Its subcellular location is the plastid. The protein localises to the chloroplast. It carries out the reaction RNA(n) + a ribonucleoside 5'-triphosphate = RNA(n+1) + diphosphate. In terms of biological role, DNA-dependent RNA polymerase catalyzes the transcription of DNA into RNA using the four ribonucleoside triphosphates as substrates. This chain is DNA-directed RNA polymerase subunit beta'', found in Vitis vinifera (Grape).